Consider the following 159-residue polypeptide: NADH-quinone oxidoreductase subunit B (159 aa).

Residues Cys-32, Cys-33, Cys-97, and Cys-126 each contribute to the [4Fe-4S] cluster site.

Belongs to the complex I 20 kDa subunit family. In terms of assembly, NDH-1 is composed of 14 different subunits. Subunits NuoB, C, D, E, F, and G constitute the peripheral sector of the complex. [4Fe-4S] cluster serves as cofactor.

It localises to the cell inner membrane. It carries out the reaction a quinone + NADH + 5 H(+)(in) = a quinol + NAD(+) + 4 H(+)(out). In terms of biological role, NDH-1 shuttles electrons from NADH, via FMN and iron-sulfur (Fe-S) centers, to quinones in the respiratory chain. The immediate electron acceptor for the enzyme in this species is believed to be ubiquinone. Couples the redox reaction to proton translocation (for every two electrons transferred, four hydrogen ions are translocated across the cytoplasmic membrane), and thus conserves the redox energy in a proton gradient. This is NADH-quinone oxidoreductase subunit B from Helicobacter pylori (strain HPAG1).